Consider the following 169-residue polypeptide: Flagellar biosynthetic protein FliU (169 aa).

Belongs to the FliB family.

Its function is as follows. Required for the secretion of flagellin and expression of motility. The sequence is that of Flagellar biosynthetic protein FliU (fliU) from Salmonella muenchen.